A 326-amino-acid polypeptide reads, in one-letter code: MATSLKNRNFLKLLDYTPAEIQYLIDLAINLKAAKKSGNEKQTLVGKNIALIFEKSSTRTRCAFEVAAFDQGAQVTYIGPSGSQIGHKESMKDTARVLGRMYDGIEYRGYGQNIVEELGEFAGVPVWNGLTNEFHPTQILADLMTMLEHAPGKTLPELSFAYLGDARNNMGNSLMVGAAKMGMDIRLVAPKSFWPDEALVTQCREIASVTGARITLTEDVEEGVYDVDFLYTDVWVSMGEPKEAWAERVSLMAPYQINQQVITATRNPEVKFMHCLPAFHNEHTTVGREIEMAYGSKDWKLLKRFLNRPTLLFSMKQKTGCTPLKR.

Carbamoyl phosphate is bound by residues 57-60, Gln84, Arg108, and 135-138; these read STRT and HPTQ. Residues Asn169, Asp233, and 237–238 each bind L-ornithine; that span reads SM. 275–276 contributes to the carbamoyl phosphate binding site; that stretch reads CL.

The protein belongs to the aspartate/ornithine carbamoyltransferase superfamily. OTCase family.

It is found in the cytoplasm. It catalyses the reaction carbamoyl phosphate + L-ornithine = L-citrulline + phosphate + H(+). It participates in amino-acid biosynthesis; L-arginine biosynthesis; L-arginine from L-ornithine and carbamoyl phosphate: step 1/3. Its function is as follows. Reversibly catalyzes the transfer of the carbamoyl group from carbamoyl phosphate (CP) to the N(epsilon) atom of ornithine (ORN) to produce L-citrulline. This chain is Ornithine carbamoyltransferase, found in Escherichia coli O6:K15:H31 (strain 536 / UPEC).